The primary structure comprises 160 residues: MGTLDTKGFTEEQEALVVKSWNAMKKNSAELGLKLFLKIFEIAPSAQKLFSFLKDSKVPLEKNTKLKPHAMSVFLMTCESAVQLRKSGKVTVRESSLKKLGANHFKYGVVDEHFEVTKFALLETIKEAVPEMWSPAMKNAWGEAYDQLVNAIKSEMKPSS.

In terms of domain architecture, Globin spans 8–157 (GFTEEQEALV…LVNAIKSEMK (150 aa)). A Homodimerization motif is present at residues 41-45 (EIAPS). Heme b contacts are provided by Ser51, Lys65, His69, Lys99, and His104. The Homodimerization motif lies at 111 to 123 (DEHFEVTKFALLE).

This sequence belongs to the plant globin family. As to quaternary structure, homodimer. It depends on heme b as a cofactor.

The enzyme catalyses Fe(III)-heme b-[protein] + nitric oxide + H2O = Fe(II)-heme b-[protein] + nitrite + 2 H(+). Functionally, phytoglobin that reduces nitrite to nitric oxide (NO) under anoxic conditions (e.g. during flooding or in waterlogged soil) and upon root nodulation. Required for general plant development and during nodulation, especially for the onset of symbiosis. Monitors nitric oxide (NO) levels during early phase of the nitrogen-fixing symbiosis and buffers oxygen in functioning nodules. May not function as an oxygen storage or transport protein. Has an unusually high affinity for O(2) through a hexacoordinate heme iron because of a very low dissociation constant. The sequence is that of Anaerobic nitrite reductase Glb1-1 from Medicago truncatula (Barrel medic).